The following is a 499-amino-acid chain: Glycerol kinase (499 aa).

T13 provides a ligand contact to ADP. Residues T13, T14, and S15 each coordinate ATP. T13 is a sn-glycerol 3-phosphate binding site. R17 is an ADP binding site. The sn-glycerol 3-phosphate site is built by R83, E84, Y135, and D244. Residues R83, E84, Y135, D244, and Q245 each contribute to the glycerol site. ADP is bound by residues T266 and G309. ATP-binding residues include T266, G309, Q313, and G410. Residues G410 and N414 each contribute to the ADP site.

The protein belongs to the FGGY kinase family.

The enzyme catalyses glycerol + ATP = sn-glycerol 3-phosphate + ADP + H(+). It functions in the pathway polyol metabolism; glycerol degradation via glycerol kinase pathway; sn-glycerol 3-phosphate from glycerol: step 1/1. Its activity is regulated as follows. Inhibited by fructose 1,6-bisphosphate (FBP). Functionally, key enzyme in the regulation of glycerol uptake and metabolism. Catalyzes the phosphorylation of glycerol to yield sn-glycerol 3-phosphate. The chain is Glycerol kinase from Paraburkholderia phymatum (strain DSM 17167 / CIP 108236 / LMG 21445 / STM815) (Burkholderia phymatum).